The following is a 406-amino-acid chain: Argininosuccinate synthase (406 aa).

Residues 11 to 19 (AYSGGLDTS) and Ala-38 contribute to the ATP site. Residues Tyr-91 and Ser-96 each contribute to the L-citrulline site. Gly-121 serves as a coordination point for ATP. Residues Thr-123, Asn-127, and Asp-128 each coordinate L-aspartate. Asn-127 contacts L-citrulline. Positions 131, 181, 190, 266, and 278 each coordinate L-citrulline.

Belongs to the argininosuccinate synthase family. Type 1 subfamily. As to quaternary structure, homotetramer.

It localises to the cytoplasm. It carries out the reaction L-citrulline + L-aspartate + ATP = 2-(N(omega)-L-arginino)succinate + AMP + diphosphate + H(+). It functions in the pathway amino-acid biosynthesis; L-arginine biosynthesis; L-arginine from L-ornithine and carbamoyl phosphate: step 2/3. In Campylobacter jejuni (strain RM1221), this protein is Argininosuccinate synthase.